Consider the following 188-residue polypeptide: PRA1 family protein 3 (188 aa).

At Met-1 the chain carries N-acetylmethionine. Residues 1 to 35 (MDVNLAPLRAWDDFFPGSDRFARPDFRDISKWNNR) lie on the Cytoplasmic side of the membrane. Transmembrane regions (helical) follow at residues 36 to 56 (VVSNLLYYQTNYLVVAAMMIS) and 57 to 77 (VVGFLSPFNMILGGIIVVLVF). Residues 78–92 (TGFVWAAHNKDILRR) are Cytoplasmic-facing. 2 helical membrane passes run 93-113 (MKKQYPTAFVMVVMLASYFLI) and 115-135 (MFGGVMVFVFGITFPLLLMFI). A required for homodimer formation and heterodimer formation with ARL6IP1 region spans residues 103–117 (MVVMLASYFLISMFG). At 136–188 (HASLRLRNLKNKLENKMEGIGLKKTPMGIILDALEQQEDSINKFADYISKARE) the chain is on the cytoplasmic side. Residues 136-188 (HASLRLRNLKNKLENKMEGIGLKKTPMGIILDALEQQEDSINKFADYISKARE) form a targeting to endoplasmic reticulum membrane region.

This sequence belongs to the PRA1 family. Homodimer. Heterodimer with ARL6IP1. Forms multimers. Interacts with ARL6. Interacts with prenylated RAB1A and RAB3A. Interacts with SLC1A1/EAAC1. Interacts with RTN2 (via first transmembrane domain). Does not interact with VAMP1, VAMP2 or VAMP3. In terms of tissue distribution, ubiquitous. Most abundant in heart and brain. In the embryonic brain cortex, expressed in neurons and astrocytes.

It is found in the endoplasmic reticulum membrane. The protein resides in the cell membrane. The protein localises to the cytoplasm. Its subcellular location is the cytoskeleton. Functionally, regulates intracellular concentrations of taurine and glutamate. Negatively modulates SLC1A1/EAAC1 glutamate transport activity by decreasing its affinity for glutamate in a PKC activity-dependent manner. Plays a role in the retention of SLC1A1/EAAC1 in the endoplasmic reticulum. The protein is PRA1 family protein 3 (Arl6ip5) of Rattus norvegicus (Rat).